A 141-amino-acid polypeptide reads, in one-letter code: Hemoglobin subunit alpha (141 aa).

Positions V1–R141 constitute a Globin domain. Phosphoserine is present on S3. K7 is subject to N6-succinyllysine. Phosphothreonine is present on T8. K11 is subject to N6-succinyllysine. K16 bears the N6-acetyllysine; alternate mark. K16 bears the N6-succinyllysine; alternate mark. S35 bears the Phosphoserine mark. K40 is subject to N6-succinyllysine. S49 bears the Phosphoserine mark. H58 contacts O2. H87 provides a ligand contact to heme b. S102 carries the post-translational modification Phosphoserine. T108 carries the post-translational modification Phosphothreonine. Residues S124 and S131 each carry the phosphoserine modification. Phosphothreonine is present on residues T134 and T137. S138 is modified (phosphoserine).

This sequence belongs to the globin family. In terms of assembly, heterotetramer of two alpha chains and two beta chains. Red blood cells.

Functionally, involved in oxygen transport from the lung to the various peripheral tissues. The chain is Hemoglobin subunit alpha from Sciurus carolinensis (Eastern gray squirrel).